A 167-amino-acid chain; its full sequence is Endoribonuclease YbeY (167 aa).

The disordered stretch occupies residues 64–101; the sequence is GKPTNVLSWPSEERASEEPGMAPEPPEPGDPEDPEPLG. Positions 90-99 are enriched in acidic residues; it reads EPGDPEDPEP. The Zn(2+) site is built by H131, H135, and H141.

Belongs to the endoribonuclease YbeY family. Requires Zn(2+) as cofactor.

Its subcellular location is the cytoplasm. Single strand-specific metallo-endoribonuclease involved in late-stage 70S ribosome quality control and in maturation of the 3' terminus of the 16S rRNA. This Cereibacter sphaeroides (strain ATCC 17023 / DSM 158 / JCM 6121 / CCUG 31486 / LMG 2827 / NBRC 12203 / NCIMB 8253 / ATH 2.4.1.) (Rhodobacter sphaeroides) protein is Endoribonuclease YbeY.